Reading from the N-terminus, the 641-residue chain is UPF0329 protein ECU11_0030 (641 aa).

The span at 358–387 shows a compositional bias: basic and acidic residues; that stretch reads RQRKREEETERSVKELVGDEEKAKSKEEKA. Residues 358–444 are disordered; the sequence is RQRKREEETE…KGGKKKSKGG (87 aa). The span at 435 to 444 shows a compositional bias: basic residues; that stretch reads KGGKKKSKGG.

This sequence belongs to the UPF0329 family.

This Encephalitozoon cuniculi (strain GB-M1) (Microsporidian parasite) protein is UPF0329 protein ECU11_0030.